Reading from the N-terminus, the 176-residue chain is Large ribosomal subunit protein uL10 (176 aa).

The protein belongs to the universal ribosomal protein uL10 family. In terms of assembly, part of the ribosomal stalk of the 50S ribosomal subunit. The N-terminus interacts with L11 and the large rRNA to form the base of the stalk. The C-terminus forms an elongated spine to which L12 dimers bind in a sequential fashion forming a multimeric L10(L12)X complex.

Functionally, forms part of the ribosomal stalk, playing a central role in the interaction of the ribosome with GTP-bound translation factors. In Carboxydothermus hydrogenoformans (strain ATCC BAA-161 / DSM 6008 / Z-2901), this protein is Large ribosomal subunit protein uL10.